A 123-amino-acid polypeptide reads, in one-letter code: Protein Wnt-3a (123 aa).

The O-palmitoleoyl serine moiety is linked to residue serine 1. Cysteine 89 and cysteine 104 are oxidised to a cystine. Asparagine 90 carries N-linked (GlcNAc...) asparagine glycosylation.

The protein belongs to the Wnt family. In terms of processing, disulfide bonds have critical and distinct roles in secretion and activity. Loss of each conserved cysteine results in high molecular weight oxidized Wnt oligomers, which are formed through inter-Wnt disulfide bonding. Palmitoleoylation is required for efficient binding to frizzled receptors. Depalmitoleoylation leads to Wnt signaling pathway inhibition.

The protein localises to the secreted. The protein resides in the extracellular space. It is found in the extracellular matrix. Ligand for members of the frizzled family of seven transmembrane receptors. Functions in the canonical Wnt signaling pathway that results in activation of transcription factors of the TCF/LEF family. Required for normal embryonic mesoderm development and formation of caudal somites. Required for normal morphogenesis of the developing neural tube. This is Protein Wnt-3a (WNT3A) from Meleagris gallopavo (Wild turkey).